The chain runs to 158 residues: Transcription elongation factor GreA (158 aa).

A coiled-coil region spans residues 8 to 74 (TKGGYNKLKD…TLERVLSTAT (67 aa)).

This sequence belongs to the GreA/GreB family.

Necessary for efficient RNA polymerase transcription elongation past template-encoded arresting sites. The arresting sites in DNA have the property of trapping a certain fraction of elongating RNA polymerases that pass through, resulting in locked ternary complexes. Cleavage of the nascent transcript by cleavage factors such as GreA or GreB allows the resumption of elongation from the new 3'terminus. GreA releases sequences of 2 to 3 nucleotides. This is Transcription elongation factor GreA from Chloroherpeton thalassium (strain ATCC 35110 / GB-78).